Reading from the N-terminus, the 124-residue chain is Small ribosomal subunit protein uS12 (124 aa).

The disordered stretch occupies residues 1–25; sequence MPTINQLIRKPRKSQKEKTASPALQ. Residue aspartate 89 is modified to 3-methylthioaspartic acid.

The protein belongs to the universal ribosomal protein uS12 family. Part of the 30S ribosomal subunit. Contacts proteins S8 and S17. May interact with IF1 in the 30S initiation complex.

Its function is as follows. With S4 and S5 plays an important role in translational accuracy. In terms of biological role, interacts with and stabilizes bases of the 16S rRNA that are involved in tRNA selection in the A site and with the mRNA backbone. Located at the interface of the 30S and 50S subunits, it traverses the body of the 30S subunit contacting proteins on the other side and probably holding the rRNA structure together. The combined cluster of proteins S8, S12 and S17 appears to hold together the shoulder and platform of the 30S subunit. In Borrelia turicatae (strain 91E135), this protein is Small ribosomal subunit protein uS12.